The primary structure comprises 681 residues: Proton channel OTOP3 (681 aa).

The span at 1-25 shows a compositional bias: basic and acidic residues; the sequence is MLSKEEPACRQFHSREKTWGNEHNG. Residues 1 to 26 are disordered; sequence MLSKEEPACRQFHSREKTWGNEHNGK. The Cytoplasmic segment spans residues 1-112; the sequence is MLSKEEPACR…LHQRAKKTGR (112 aa). The helical transmembrane segment at 113–133 threads the bilayer; that stretch reads LFSGLFGLNLMFLGGTVVSSV. Residues 134-143 lie on the Extracellular side of the membrane; sequence ALSNKAVPER. The helical transmembrane segment at 144-166 threads the bilayer; the sequence is DSQSFLCILMLLSSVWALYHLLF. The Cytoplasmic segment spans residues 167 to 182; the sequence is IRNQNGAVHHDHHAGA. A helical membrane pass occupies residues 183-204; sequence MWLKASLAIFGVCSIILSIFEI. The Extracellular portion of the chain corresponds to 205–216; that stretch reads GHALLLQNCEIL. The helical transmembrane segment at 217 to 240 threads the bilayer; that stretch reads MDIVFFSIEIVFVSVQTVLLWVSC. The Cytoplasmic portion of the chain corresponds to 241 to 248; sequence KDCVQMHH. Residues 249 to 271 form a helical membrane-spanning segment; sequence SVTRYGIMLTLATDILLWLTAVI. The Extracellular segment spans residues 272-317; the sequence is DDSLEQDLEILQSNSTQDESNEMAQCQCPTDSMCWGLKQGYVTMFP. A helical transmembrane segment spans residues 318–334; sequence FNIEYSLICATLLFIMW. Residues 335–358 are Cytoplasmic-facing; it reads KNVGRREKLHSDPPRHTFQLRGII. Residues 359–378 form a helical membrane-spanning segment; that stretch reads YGPLIGGAALLVGISVFVQY. Residues 379–392 are Extracellular-facing; sequence QVEATSGMVSILSY. The helical transmembrane segment at 393–415 threads the bilayer; it reads HMYYGYKMIILAPMIVCSVAGII. Residues 416-507 are Cytoplasmic-facing; it reads AHSLREKEKK…QGKMKNYTRK (92 aa). A helical transmembrane segment spans residues 508 to 529; the sequence is LDVTLLFVSAVGQLGISYFSII. The Extracellular segment spans residues 530–540; that stretch reads ATVVTTPWTML. Residues 541–563 form a helical membrane-spanning segment; that stretch reads SALNFSNSLLLILQYLSQTMFII. The Cytoplasmic segment spans residues 564-614; sequence ESMRSIHEEEKEKPGHHEESHRRMSVQEMHKAPPSCLDAGHLGLSRRVVKE. Residues 615–632 form a helical membrane-spanning segment; that stretch reads MAMFLMICNIMCWILGAF. Over 633-651 the chain is Extracellular; that stretch reads GAHPLYMNGLERQLYGSGI. A helical transmembrane segment spans residues 652 to 674; sequence WLAILNIGLPLSVFYRMHSVGIL. Residues 675-681 lie on the Cytoplasmic side of the membrane; the sequence is LEVYLHA.

Belongs to the otopetrin family. Homodimer.

It localises to the cell membrane. The enzyme catalyses H(+)(in) = H(+)(out). With respect to regulation, pH regulates the proton channel activity from both sides of the plasma membrane. Low pH activates the channel from the extracellular side but inactivates the channel on the intracellular side. Zn(2+) and Ca(2+) can partially block the channel. Its function is as follows. Proton-selective channel gated by extracellular protons. The chain is Proton channel OTOP3 (otop3) from Xenopus tropicalis (Western clawed frog).